A 518-amino-acid chain; its full sequence is Xaa-Pro aminopeptidase 3 (518 aa).

The N-terminal 48 residues, Met-1–Tyr-48, are a transit peptide targeting the mitochondrion. Tyr-314, Asp-345, Asp-356, His-434, His-441, Glu-461, and Glu-485 together coordinate substrate. Residues Asp-345, Asp-356, and His-434 each contribute to the Mn(2+) site. Positions 461 and 485 each coordinate Mn(2+).

It belongs to the peptidase M24B family. Homodimer. Requires Mn(2+) as cofactor.

The protein localises to the mitochondrion. It localises to the cytoplasm. It catalyses the reaction Release of any N-terminal amino acid, including proline, that is linked to proline, even from a dipeptide or tripeptide.. Its function is as follows. Catalyzes the removal of a penultimate prolyl residue from the N-termini of peptides, such as Leu-Pro-Ala. Also shows low activity towards peptides with Ala or Ser at the P1 position. This is Xaa-Pro aminopeptidase 3 (xpnpep3) from Dictyostelium discoideum (Social amoeba).